Here is a 367-residue protein sequence, read N- to C-terminus: Putative F-box protein At3g21120 (367 aa).

The F-box domain maps to Met-1 to His-43.

The polypeptide is Putative F-box protein At3g21120 (Arabidopsis thaliana (Mouse-ear cress)).